The chain runs to 517 residues: tRNA (guanine-N(7)-)-methyltransferase non-catalytic subunit trm82 (517 aa).

A disordered region spans residues 40–117 (WKSPVPESMS…TKNSSPKILE (78 aa)). The segment covering 52–64 (KTTEEETQTKNED) has biased composition (basic and acidic residues). WD repeat units follow at residues 116-158 (LEPS…GLRQ), 260-301 (GHVS…HIIE), and 306-346 (GHIE…LLSK).

This sequence belongs to the WD repeat TRM82 family. In terms of assembly, forms a heterodimer with the catalytic subunit trm8.

The protein localises to the nucleus. It functions in the pathway tRNA modification; N(7)-methylguanine-tRNA biosynthesis. Functionally, required for the formation of N(7)-methylguanine at position 46 (m7G46) in tRNA. In the complex, it is required to stabilize and induce conformational changes of the catalytic subunit. This Sclerotinia sclerotiorum (strain ATCC 18683 / 1980 / Ss-1) (White mold) protein is tRNA (guanine-N(7)-)-methyltransferase non-catalytic subunit trm82 (trm82).